A 380-amino-acid chain; its full sequence is Queuine tRNA-ribosyltransferase (380 aa).

Asp-93 serves as the catalytic Proton acceptor. Substrate contacts are provided by residues 93–97 (DSGGF), Asp-147, Gln-198, and Gly-225. Positions 256–262 (GVGLPSN) are RNA binding. Residue Asp-275 is the Nucleophile of the active site. An RNA binding; important for wobble base 34 recognition region spans residues 280-284 (ARNGR). Zn(2+) is bound by residues Cys-313, Cys-315, Cys-318, and His-344.

The protein belongs to the queuine tRNA-ribosyltransferase family. In terms of assembly, homodimer. Within each dimer, one monomer is responsible for RNA recognition and catalysis, while the other monomer binds to the replacement base PreQ1. Requires Zn(2+) as cofactor.

It carries out the reaction 7-aminomethyl-7-carbaguanine + guanosine(34) in tRNA = 7-aminomethyl-7-carbaguanosine(34) in tRNA + guanine. The protein operates within tRNA modification; tRNA-queuosine biosynthesis. Its function is as follows. Catalyzes the base-exchange of a guanine (G) residue with the queuine precursor 7-aminomethyl-7-deazaguanine (PreQ1) at position 34 (anticodon wobble position) in tRNAs with GU(N) anticodons (tRNA-Asp, -Asn, -His and -Tyr). Catalysis occurs through a double-displacement mechanism. The nucleophile active site attacks the C1' of nucleotide 34 to detach the guanine base from the RNA, forming a covalent enzyme-RNA intermediate. The proton acceptor active site deprotonates the incoming PreQ1, allowing a nucleophilic attack on the C1' of the ribose to form the product. After dissociation, two additional enzymatic reactions on the tRNA convert PreQ1 to queuine (Q), resulting in the hypermodified nucleoside queuosine (7-(((4,5-cis-dihydroxy-2-cyclopenten-1-yl)amino)methyl)-7-deazaguanosine). In Clostridium perfringens (strain ATCC 13124 / DSM 756 / JCM 1290 / NCIMB 6125 / NCTC 8237 / Type A), this protein is Queuine tRNA-ribosyltransferase.